Here is a 213-residue protein sequence, read N- to C-terminus: Ubiquitin-conjugating enzyme E2 S (213 aa).

One can recognise a UBC core domain in the interval 13–159 (QIIRQVAKEV…ARMMTEIHAK (147 aa)). The Glycyl thioester intermediate role is filled by C97. The tract at residues 157-213 (HAKPTTKTAPTKNEETNCPSTSGTQSTSEGPMAKKHAGDKNAAEKKKKEKKRALRRL) is disordered. Residues 174-185 (CPSTSGTQSTSE) show a composition bias toward polar residues. Basic and acidic residues predominate over residues 192–202 (HAGDKNAAEKK). Residues 203-213 (KKEKKRALRRL) show a composition bias toward basic residues.

Belongs to the ubiquitin-conjugating enzyme family.

The catalysed reaction is S-ubiquitinyl-[E1 ubiquitin-activating enzyme]-L-cysteine + [E2 ubiquitin-conjugating enzyme]-L-cysteine = [E1 ubiquitin-activating enzyme]-L-cysteine + S-ubiquitinyl-[E2 ubiquitin-conjugating enzyme]-L-cysteine.. It participates in protein modification; protein ubiquitination. In terms of biological role, catalyzes the covalent attachment of ubiquitin to other proteins. Acts as an essential factor of the anaphase promoting complex/cyclosome (APC/C), a cell cycle-regulated ubiquitin ligase that controls progression through mitosis. Acts by specifically elongating polyubiquitin chains initiated by the E2 enzyme UBCH10 on APC/C substrates, enhancing the degradation of APC/C substrates by the proteasome and promoting mitotic exit. The protein is Ubiquitin-conjugating enzyme E2 S of Branchiostoma floridae (Florida lancelet).